We begin with the raw amino-acid sequence, 320 residues long: Cytosolic Fe-S cluster assembly factor NUBP1 (320 aa).

An N-acetylmethionine modification is found at Met-1. 4 residues coordinate [4Fe-4S] cluster: Cys-8, Cys-22, Cys-25, and Cys-31. ATP is bound at residue 62-69 (GKGGVGKS). [4Fe-4S] cluster contacts are provided by Cys-235 and Cys-238. Residue Ser-319 is modified to Phosphoserine.

This sequence belongs to the Mrp/NBP35 ATP-binding proteins family. NUBP1/NBP35 subfamily. In terms of assembly, heterotetramer of 2 NUBP1 and 2 NUBP2 chains. Interacts with KIFC1. Interacts with the BBS/CCT complex subunit CCT1. [4Fe-4S] cluster is required as a cofactor.

The protein localises to the cytoplasm. The protein resides in the nucleus. Its subcellular location is the cell projection. It is found in the cytoskeleton. It localises to the cilium axoneme. The protein localises to the cilium basal body. The protein resides in the microtubule organizing center. Its subcellular location is the centrosome. It is found in the centriole. Its function is as follows. Component of the cytosolic iron-sulfur (Fe/S) protein assembly (CIA) machinery. Required for maturation of extramitochondrial Fe-S proteins. The NUBP1-NUBP2 heterotetramer forms a Fe-S scaffold complex, mediating the de novo assembly of an Fe-S cluster and its transfer to target apoproteins. Implicated in the regulation of centrosome duplication. Negatively regulates cilium formation and structure. In Rattus norvegicus (Rat), this protein is Cytosolic Fe-S cluster assembly factor NUBP1.